The following is a 502-amino-acid chain: Aspartyl/glutamyl-tRNA(Asn/Gln) amidotransferase subunit B (502 aa).

This sequence belongs to the GatB/GatE family. GatB subfamily. Heterotrimer of A, B and C subunits.

It catalyses the reaction L-glutamyl-tRNA(Gln) + L-glutamine + ATP + H2O = L-glutaminyl-tRNA(Gln) + L-glutamate + ADP + phosphate + H(+). It carries out the reaction L-aspartyl-tRNA(Asn) + L-glutamine + ATP + H2O = L-asparaginyl-tRNA(Asn) + L-glutamate + ADP + phosphate + 2 H(+). Allows the formation of correctly charged Asn-tRNA(Asn) or Gln-tRNA(Gln) through the transamidation of misacylated Asp-tRNA(Asn) or Glu-tRNA(Gln) in organisms which lack either or both of asparaginyl-tRNA or glutaminyl-tRNA synthetases. The reaction takes place in the presence of glutamine and ATP through an activated phospho-Asp-tRNA(Asn) or phospho-Glu-tRNA(Gln). This chain is Aspartyl/glutamyl-tRNA(Asn/Gln) amidotransferase subunit B, found in Pseudarthrobacter chlorophenolicus (strain ATCC 700700 / DSM 12829 / CIP 107037 / JCM 12360 / KCTC 9906 / NCIMB 13794 / A6) (Arthrobacter chlorophenolicus).